The chain runs to 622 residues: DNA mismatch repair protein MutL (622 aa).

It belongs to the DNA mismatch repair MutL/HexB family.

Its function is as follows. This protein is involved in the repair of mismatches in DNA. It is required for dam-dependent methyl-directed DNA mismatch repair. May act as a 'molecular matchmaker', a protein that promotes the formation of a stable complex between two or more DNA-binding proteins in an ATP-dependent manner without itself being part of a final effector complex. The sequence is that of DNA mismatch repair protein MutL from Prosthecochloris aestuarii (strain DSM 271 / SK 413).